Here is a 387-residue protein sequence, read N- to C-terminus: Trichocyst matrix protein T2-C (387 aa).

The signal sequence occupies residues methionine 1–alanine 19. A propeptide spanning residues aspartate 20–glycine 48 is cleaved from the precursor. Residues leucine 51–alanine 163 are a coiled coil. Positions lysine 184–glutamine 239 are excised as a propeptide. The stretch at threonine 294–aspartate 333 forms a coiled coil.

The protein belongs to the TMP family. In terms of processing, two components are produced by post-translational processing from the precursor peptide.

The protein localises to the trichocyst. Structural protein that crystallize inside the trichocyst matrix. This Paramecium tetraurelia protein is Trichocyst matrix protein T2-C (T2C).